The chain runs to 249 residues: Transcription initiation factor TFIID subunit 9B (249 aa).

N-acetylmethionine is present on Met-1. Ser-147 carries the phosphoserine modification. Positions 148–171 (AVSSRPTTPPVAPPQAVSGPNKAA) are disordered. Thr-172 bears the Phosphothreonine mark. A Phosphoserine modification is found at Ser-175. Polar residues predominate over residues 224 to 234 (VSSQNTATDSN). The tract at residues 224-249 (VSSQNTATDSNPLKRKHDDDDDNDTM) is disordered.

It belongs to the TAF9 family. In terms of assembly, binds TAF5 and TAF6. Component of TFIID and the TATA-binding protein-free TAF complex (TFTC). TFIID is composed of TATA binding protein (TBP) and a number of TBP-associated factors (TAFs). Binds N-terminal domain of p53/TP53 which is essential for transcription.

The protein localises to the nucleus. Functionally, essential for cell viability. TAF9 and TAF9B are involved in transcriptional activation as well as repression of distinct but overlapping sets of genes. May have a role in gene regulation associated with apoptosis. TAFs are components of the transcription factor IID (TFIID) complex, the TBP-free TAFII complex (TFTC), the PCAF histone acetylase complex and the STAGA transcription coactivator-HAT complex. TFIID or TFTC are essential for the regulation of RNA polymerase II-mediated transcription. This chain is Transcription initiation factor TFIID subunit 9B (Taf9b), found in Mus musculus (Mouse).